Here is a 30-residue protein sequence, read N- to C-terminus: Cysteine-rich venom protein hematin (30 aa).

Belongs to the CRISP family. Post-translationally, contains 8 disulfide bonds. As to expression, expressed by the venom gland.

It is found in the secreted. Inhibits calcium-activated potassium channels (KCa), voltage-gated potassium channel (Kv), and the calcium release channel/ryanodine receptor (RyR). The polypeptide is Cysteine-rich venom protein hematin (Hemachatus haemachatus (Rinkhals)).